The sequence spans 701 residues: Pseudouridylate synthase PUS7L (701 aa).

Residue S79 is modified to Phosphoserine. D339 acts as the Nucleophile in catalysis. The region spanning 424–647 is the TRUD domain; sequence GFVNYYGPQR…PGCYRQILKH (224 aa).

It belongs to the pseudouridine synthase TruD family.

The enzyme catalyses a uridine in mRNA = a pseudouridine in mRNA. Its function is as follows. Pseudouridine synthase that catalyzes pseudouridylation of mRNAs. The polypeptide is Pseudouridylate synthase PUS7L (Homo sapiens (Human)).